The following is a 154-amino-acid chain: Protein X (154 aa).

A mitochondrial targeting sequence region spans residues 68–117 (PCALRFTSARRMETTVNTHMILPKVLHKRTLGLPAMSTIDLEAYFKDCLF).

The protein belongs to the orthohepadnavirus protein X family. May form homodimer. May interact with host CEBPA, CFLAR, CREB1, DDB1, E4F1, HBXIP, HSPD1/HSP60, NFKBIA, POLR2E and SMAD4. Interacts with host SMC5-SMC6 complex and induces its degradation. Interacts with host TRPC4AP; leading to prevent ubiquitination of TRPC4AP. Interacts with host PLSCR1; this interaction promotes ubiquitination and degradation of HBx and impairs HBx-mediated cell proliferation. A fraction may be phosphorylated in insect cells and HepG2 cells, a human hepatoblastoma cell line. Phosphorylated in vitro by host protein kinase C or mitogen-activated protein kinase. N-acetylated in insect cells.

The protein resides in the host cytoplasm. Its subcellular location is the host nucleus. The protein localises to the host mitochondrion. Its function is as follows. Multifunctional protein that plays a role in silencing host antiviral defenses and promoting viral transcription. Does not seem to be essential for HBV infection. May be directly involved in development of cirrhosis and liver cancer (hepatocellular carcinoma). Most of cytosolic activities involve modulation of cytosolic calcium. The effect on apoptosis is controversial depending on the cell types in which the studies have been conducted. May induce apoptosis by localizing in mitochondria and causing loss of mitochondrial membrane potential. May also modulate apoptosis by binding host CFLAR, a key regulator of the death-inducing signaling complex (DISC). Promotes viral transcription by using the host E3 ubiquitin ligase DDB1 to target the SMC5-SMC6 complex to proteasomal degradation. This host complex would otherwise bind to viral episomal DNA, and prevents its transcription. Moderately stimulates transcription of many different viral and cellular transcription elements. Promoters and enhancers stimulated by HBx contain DNA binding sites for NF-kappa-B, AP-1, AP-2, c-EBP, ATF/CREB, or the calcium-activated factor NF-AT. The protein is Protein X of Hepatitis B virus genotype C subtype ayw (isolate Australia/AustRC/1992) (HBV-C).